The chain runs to 228 residues: Ribonuclease 3 (228 aa).

The RNase III domain maps to 3 to 132; that stretch reads IRPLEEHLGI…FLGALYLDQG (130 aa). Position 45 (glutamate 45) interacts with Mg(2+). The active site involves aspartate 49. Positions 118 and 121 each coordinate Mg(2+). The active site involves glutamate 121. The DRBM domain maps to 158–227; the sequence is DYKSQLQEFV…AKNALDSINN (70 aa). A disordered region spans residues 205–228; sequence GTGRTKKEAEQRAAKNALDSINNS.

It belongs to the ribonuclease III family. As to quaternary structure, homodimer. It depends on Mg(2+) as a cofactor.

The protein localises to the cytoplasm. It catalyses the reaction Endonucleolytic cleavage to 5'-phosphomonoester.. Its function is as follows. Digests double-stranded RNA. Involved in the processing of primary rRNA transcript to yield the immediate precursors to the large and small rRNAs (23S and 16S). Processes some mRNAs, and tRNAs when they are encoded in the rRNA operon. Processes pre-crRNA and tracrRNA of type II CRISPR loci if present in the organism. The protein is Ribonuclease 3 of Oceanobacillus iheyensis (strain DSM 14371 / CIP 107618 / JCM 11309 / KCTC 3954 / HTE831).